A 354-amino-acid chain; its full sequence is Arginase-2, mitochondrial (354 aa).

Residues Met1–Ser22 constitute a mitochondrion transit peptide. Residues His120, Asp143, His145, and Asp147 each coordinate Mn(2+). Residues His145–Asn149, Ser156–Asn158, and Asp202 each bind substrate. Mn(2+) contacts are provided by Asp251 and Asp253. Substrate-binding residues include Thr265 and Glu296. The disordered stretch occupies residues Tyr334–Ile354.

Belongs to the arginase family. As to quaternary structure, homotrimer. It depends on Mn(2+) as a cofactor. Expressed most strongly in kidney and prostate, much less strongly in the brain, skeletal muscle, placenta, lung, mammary gland, macrophage, uterus, testis and gut, but apparently not in the liver, heart and pancreas. Expressed in activated T cells.

Its subcellular location is the mitochondrion. The catalysed reaction is L-arginine + H2O = urea + L-ornithine. It participates in nitrogen metabolism; urea cycle; L-ornithine and urea from L-arginine: step 1/1. May play a role in the regulation of extra-urea cycle arginine metabolism and also in down-regulation of nitric oxide synthesis. Extrahepatic arginase functions to regulate L-arginine bioavailability to nitric oxid synthase (NOS). Arginine metabolism is a critical regulator of innate and adaptive immune responses. Seems to be involved in negative regulation of the survival capacity of activated CD4(+) and CD8(+) T cells. May suppress inflammation-related signaling in asthmatic airway epithelium. May contribute to the immune evasion of H.pylori by restricting M1 macrophage activation and polyamine metabolism. In fetal dendritic cells may play a role in promoting immune suppression and T cell TNF-alpha production during gestation. Regulates RPS6KB1 signaling, which promotes endothelial cell senescence and inflammation and implicates NOS3/eNOS dysfunction. Can inhibit endothelial autophagy independently of its enzymatic activity implicating mTORC2 signaling. Involved in vascular smooth muscle cell senescence and apoptosis independently of its enzymatic activity. Since NOS is found in the penile corpus cavernosum smooth muscle, the clitoral corpus cavernosum and the vagina, arginase-2 plays a role in both male and female sexual arousal. This is Arginase-2, mitochondrial (ARG2) from Homo sapiens (Human).